The chain runs to 844 residues: 3',5'-cyclic-AMP phosphodiesterase 4A (844 aa).

The segment at 1–124 is disordered; sequence MEPPAAPSER…RSPLDSQASP (124 aa). S13 carries the phosphoserine modification. Over residues 36–46 the composition is skewed to low complexity; it reads QPRTPIRIQQR. The span at 51–78 shows a compositional bias: basic and acidic residues; sequence SAERSETERSPHRPIERADAVDTGDRPG. Polar residues predominate over residues 82–91; sequence TRMSWPSSFH. S147 is subject to Phosphoserine; by MAPKAPK2. Phosphoserine is present on residues S152, S160, and S204. A disordered region spans residues 296–317; it reads PSPTPRQRAFQQPPPSVLRQSQ. Position 333 is a phosphoserine (S333). In terms of domain architecture, PDEase spans 343–672; the sequence is VKTDQEDLLA…DWYHSAIRQS (330 aa). A Glycyl lysine isopeptide (Lys-Gly) (interchain with G-Cter in SUMO) cross-link involves residue K344. H419 functions as the Proton donor in the catalytic mechanism. Residue H419 participates in 3',5'-cyclic AMP binding. The AMP site is built by H419 and H423. The Zn(2+) site is built by H423, H459, D460, and D577. 4 residues coordinate AMP: D460, D577, Q628, and F631. D460 contributes to the Mg(2+) binding site. Residue D460 participates in Mn(2+) binding. Q628 and F631 together coordinate 3',5'-cyclic AMP. Disordered stretches follow at residues 668–690 and 818–844; these read AIRQ…PSLP and SACS…GDPA. Phosphoserine is present on residues S672 and S674. The span at 820–830 shows a compositional bias: polar residues; sequence CSGTSGDNSAI.

Belongs to the cyclic nucleotide phosphodiesterase family. PDE4 subfamily. As to quaternary structure, interacts with LYN (via SH3 domain). Interacts with ARRB2. Requires Zn(2+) as cofactor. Mg(2+) is required as a cofactor. It depends on Mn(2+) as a cofactor. Post-translationally, phosphorylated by MAPKAPK2 at Ser-147; it counteracts PKA-induced activation of PDE4A and modulates intracellular cAMP levels. Likely involved in cellular desensitization to cAMP signaling. Proteolytically cleaved by CASP3. Isoform 2 is testis specific.

Its subcellular location is the cytoplasm. The protein localises to the cytosol. It is found in the membrane. It catalyses the reaction 3',5'-cyclic AMP + H2O = AMP + H(+). The protein operates within purine metabolism; 3',5'-cyclic AMP degradation; AMP from 3',5'-cyclic AMP: step 1/1. Inhibited by rolipram. Functionally, hydrolyzes the second messenger 3',5'-cyclic AMP (cAMP), which is a key regulator of many important physiological processes. In terms of biological role, efficiently hydrolyzes cAMP. This is 3',5'-cyclic-AMP phosphodiesterase 4A (Pde4a) from Rattus norvegicus (Rat).